We begin with the raw amino-acid sequence, 166 residues long: Ribosomal RNA large subunit methyltransferase H (166 aa).

S-adenosyl-L-methionine-binding positions include leucine 85, glycine 116, and isoleucine 135–phenylalanine 140.

The protein belongs to the RNA methyltransferase RlmH family. As to quaternary structure, homodimer.

It is found in the cytoplasm. It catalyses the reaction pseudouridine(1915) in 23S rRNA + S-adenosyl-L-methionine = N(3)-methylpseudouridine(1915) in 23S rRNA + S-adenosyl-L-homocysteine + H(+). In terms of biological role, specifically methylates the pseudouridine at position 1915 (m3Psi1915) in 23S rRNA. This Francisella tularensis subsp. holarctica (strain FTNF002-00 / FTA) protein is Ribosomal RNA large subunit methyltransferase H.